The chain runs to 37 residues: Alpha-conotoxin-like Kn1.2 (37 aa).

The span at 1–15 (ESDGAHAKARADKPA) shows a compositional bias: basic and acidic residues. A propeptide spanning residues 1-22 (ESDGAHAKARADKPARSATNRQ) is cleaved from the precursor. The interval 1–23 (ESDGAHAKARADKPARSATNRQP) is disordered. 2 disulfide bridges follow: cysteine 25-cysteine 31 and cysteine 26-cysteine 36. Cysteine 36 is modified (cysteine amide).

This sequence belongs to the conotoxin A superfamily. As to expression, expressed by the venom duct.

The protein localises to the secreted. Its function is as follows. Alpha-conotoxins act on postsynaptic membranes, they bind to the nicotinic acetylcholine receptors (nAChR) and thus inhibit them. This toxin inhibits high voltage-activated (HVA) calcium channel currents in rat DRG neurons (13% inhibition at 1 uM toxin) probably by activating GABA(B) receptors (GABBR1 and/or GABBR2). The protein is Alpha-conotoxin-like Kn1.2 of Conus kinoshitai (Kinoshita's cone).